The sequence spans 249 residues: Proteasome subunit alpha type-4 (249 aa).

This sequence belongs to the peptidase T1A family. In terms of assembly, the 26S proteasome consists of a 20S proteasome core and two 19S regulatory subunits. The 20S proteasome core is composed of 28 subunits that are arranged in four stacked rings, resulting in a barrel-shaped structure. The two end rings are each formed by seven alpha subunits, and the two central rings are each formed by seven beta subunits. The catalytic chamber with the active sites is on the inside of the barrel.

It is found in the cytoplasm. Its subcellular location is the nucleus. Its function is as follows. The proteasome is a multicatalytic proteinase complex which is characterized by its ability to cleave peptides with Arg, Phe, Tyr, Leu, and Glu adjacent to the leaving group at neutral or slightly basic pH. The proteasome has an ATP-dependent proteolytic activity. This chain is Proteasome subunit alpha type-4 (PAC1), found in Petunia hybrida (Petunia).